The sequence spans 124 residues: Small ribosomal subunit protein uS13 (124 aa).

Residues 95-124 (GLPVRGQRTKTNARTRKGPKRTIAGKKKAR) are disordered.

This sequence belongs to the universal ribosomal protein uS13 family. As to quaternary structure, part of the 30S ribosomal subunit. Forms a loose heterodimer with protein S19. Forms two bridges to the 50S subunit in the 70S ribosome.

Its function is as follows. Located at the top of the head of the 30S subunit, it contacts several helices of the 16S rRNA. In the 70S ribosome it contacts the 23S rRNA (bridge B1a) and protein L5 of the 50S subunit (bridge B1b), connecting the 2 subunits; these bridges are implicated in subunit movement. Contacts the tRNAs in the A and P-sites. The chain is Small ribosomal subunit protein uS13 from Mycolicibacterium smegmatis (strain ATCC 700084 / mc(2)155) (Mycobacterium smegmatis).